The following is a 183-amino-acid chain: Holliday junction branch migration complex subunit RuvA (183 aa).

The interval M1–L64 is domain I. The tract at residues D65–S139 is domain II. A region of interest (flexible linker) is located at residue S139. A domain III region spans residues S139–G183.

The protein belongs to the RuvA family. Homotetramer. Forms an RuvA(8)-RuvB(12)-Holliday junction (HJ) complex. HJ DNA is sandwiched between 2 RuvA tetramers; dsDNA enters through RuvA and exits via RuvB. An RuvB hexamer assembles on each DNA strand where it exits the tetramer. Each RuvB hexamer is contacted by two RuvA subunits (via domain III) on 2 adjacent RuvB subunits; this complex drives branch migration. In the full resolvosome a probable DNA-RuvA(4)-RuvB(12)-RuvC(2) complex forms which resolves the HJ.

The protein resides in the cytoplasm. Functionally, the RuvA-RuvB-RuvC complex processes Holliday junction (HJ) DNA during genetic recombination and DNA repair, while the RuvA-RuvB complex plays an important role in the rescue of blocked DNA replication forks via replication fork reversal (RFR). RuvA specifically binds to HJ cruciform DNA, conferring on it an open structure. The RuvB hexamer acts as an ATP-dependent pump, pulling dsDNA into and through the RuvAB complex. HJ branch migration allows RuvC to scan DNA until it finds its consensus sequence, where it cleaves and resolves the cruciform DNA. The polypeptide is Holliday junction branch migration complex subunit RuvA (Campylobacter jejuni subsp. jejuni serotype O:23/36 (strain 81-176)).